A 341-amino-acid polypeptide reads, in one-letter code: L-threonine 3-dehydrogenase (341 aa).

Cys-38 provides a ligand contact to Zn(2+). Catalysis depends on charge relay system residues Thr-40 and His-43. His-63, Glu-64, Cys-93, Cys-96, Cys-99, and Cys-107 together coordinate Zn(2+). Residues Ile-175, Asp-195, Arg-200, 262–264 (LGI), and 286–287 (IY) contribute to the NAD(+) site.

The protein belongs to the zinc-containing alcohol dehydrogenase family. As to quaternary structure, homotetramer. Requires Zn(2+) as cofactor.

It localises to the cytoplasm. It catalyses the reaction L-threonine + NAD(+) = (2S)-2-amino-3-oxobutanoate + NADH + H(+). Its pathway is amino-acid degradation; L-threonine degradation via oxydo-reductase pathway; glycine from L-threonine: step 1/2. Catalyzes the NAD(+)-dependent oxidation of L-threonine to 2-amino-3-ketobutyrate. The chain is L-threonine 3-dehydrogenase from Shewanella woodyi (strain ATCC 51908 / MS32).